Here is a 477-residue protein sequence, read N- to C-terminus: Histidine--tRNA ligase (477 aa).

This sequence belongs to the class-II aminoacyl-tRNA synthetase family. In terms of assembly, homodimer.

The protein localises to the cytoplasm. It carries out the reaction tRNA(His) + L-histidine + ATP = L-histidyl-tRNA(His) + AMP + diphosphate + H(+). The chain is Histidine--tRNA ligase from Xanthomonas campestris pv. campestris (strain 8004).